Here is a 474-residue protein sequence, read N- to C-terminus: Flotillin-like protein 3 (474 aa).

The S-palmitoyl cysteine moiety is linked to residue Cys35. 2 coiled-coil regions span residues 235-255 and 305-325; these read ENQR…KKAA and QYET…KEAE.

It belongs to the band 7/mec-2 family. Flotillin subfamily. Post-translationally, may be palmitoylated. In terms of tissue distribution, expressed in all plant organs. Primarily expressed in vascular tissues. No change in spatial expression in root upon inoculation. Expression limited to the nodule vascular tissue.

The protein localises to the cell membrane. Its subcellular location is the membrane. The protein resides in the caveola. Its function is as follows. May act as a scaffolding protein within caveolar membranes, functionally participating in formation of caveolae or caveolae-like vesicles. May be involved in nodule formation. In Medicago truncatula (Barrel medic), this protein is Flotillin-like protein 3 (FLOT3).